The chain runs to 226 residues: Putative DNA repair protein recA homolog 4 (226 aa).

41-48 (GPEASGKT) serves as a coordination point for ATP.

It belongs to the RecA family.

The protein resides in the cytoplasm. Its function is as follows. Involved in recombination ability and DNA strand transfer activity. The protein is Putative DNA repair protein recA homolog 4 of Arabidopsis thaliana (Mouse-ear cress).